The chain runs to 128 residues: DNA polymerase epsilon subunit 3 (128 aa).

Basic and acidic residues predominate over residues 98 to 110; the sequence is EKKESKASKKDSN. Residues 98–128 form a disordered region; the sequence is EKKESKASKKDSNTAENANASATATAEEAPE. Positions 111-128 are enriched in low complexity; it reads TAENANASATATAEEAPE.

As to quaternary structure, homodimer. Component of the DNA polymerase epsilon complex consisting of four subunits: the catalytic subunit PolE1/DNApol-epsilon255 and the accessory subunits PolE2/DNApol-epsilon58, Chrac-14/DNApolE3 and PolE4. Component of the chromatin accessibility complex (CHRAC), composed of Chrac-14, Chrac-16, Acf and Iswi. Forms an heterodimer with Chrac-16. The Chrac-14/Chrac-16 heterodimer interacts with Acf (via N-terminus). Interacts directly with Iswi and this interaction is further stabilized by association with Chrac-16. Component of the Ada2a-containing (ATAC) complex composed of at least Ada2a, Atac1, Hcf, Ada3, Gcn5, Mocs2B, Charac-14, Atac3, Atac2, NC2beta and wds. Interacts with cid.

It localises to the nucleus. Its function is as follows. Accessory component of the DNA polymerase epsilon complex. Participates in DNA repair and in chromosomal DNA replication. Histone-like protein which promotes nucleosome sliding of ATP-dependent nucleosome remodeling complexes. Part of the chromatin-accessibility complex (CHRAC) which uses energy/ATP to increase the general accessibility of DNA in chromatin. As a heterodimer with Chrac-16, binds DNA and facilitates nucleosome sliding by Acf. Has a role in DNA damage response by preventing cid mislocalization to chromatin. In Drosophila melanogaster (Fruit fly), this protein is DNA polymerase epsilon subunit 3.